Consider the following 190-residue polypeptide: Nucleoside triphosphate pyrophosphatase (190 aa).

Catalysis depends on Asp69, which acts as the Proton acceptor.

Belongs to the Maf family. A divalent metal cation is required as a cofactor.

The protein localises to the cytoplasm. The enzyme catalyses a ribonucleoside 5'-triphosphate + H2O = a ribonucleoside 5'-phosphate + diphosphate + H(+). It catalyses the reaction a 2'-deoxyribonucleoside 5'-triphosphate + H2O = a 2'-deoxyribonucleoside 5'-phosphate + diphosphate + H(+). Nucleoside triphosphate pyrophosphatase. May have a dual role in cell division arrest and in preventing the incorporation of modified nucleotides into cellular nucleic acids. In Helicobacter pylori (strain P12), this protein is Nucleoside triphosphate pyrophosphatase.